A 218-amino-acid chain; its full sequence is Ras-related protein Rab-27B (218 aa).

Threonine 2 bears the N-acetylthreonine mark. Residue 16-24 (GDSGVGKTT) participates in GTP binding. The Effector region motif lies at 38-46 (FITTVGIDF). GTP is bound by residues 74 to 78 (DTAGQ), 133 to 136 (NKAD), and 163 to 165 (SAA). The cysteines at positions 123 and 188 are disulfide-linked. Residues 193-218 (HIPDTVNGSSSGKLDGEKSAEKKCAC) form a disordered region. Residues 206 to 218 (LDGEKSAEKKCAC) show a composition bias toward basic and acidic residues. 2 S-geranylgeranyl cysteine lipidation sites follow: cysteine 216 and cysteine 218. Cysteine 218 carries the cysteine methyl ester modification.

This sequence belongs to the small GTPase superfamily. Rab family. Interacts with SYTL2, SYTL4, MYRIP and MLPH. Interacts with RPH3A and RPH3A. Interacts (GDP-bound form preferentially) with DENND10. Expressed at an extraordinary high level (0.1% of total protein) in urothelium.

The protein resides in the membrane. Its subcellular location is the late endosome. The enzyme catalyses GTP + H2O = GDP + phosphate + H(+). With respect to regulation, regulated by guanine nucleotide exchange factors (GEFs) which promote the exchange of bound GDP for free GTP, GTPase activating proteins (GAPs) which increase the GTP hydrolysis activity, and GDP dissociation inhibitors which inhibit the dissociation of the nucleotide from the GTPase. Activated by GEFs such as DENND10. In terms of biological role, small GTPase which cycles between active GTP-bound and inactive GDP-bound states. In its active state, binds to a variety of effector proteins to regulate homeostasis of late endocytic pathway, including endosomal positioning, maturation and secretion. Plays a role in NTRK2/TRKB axonal anterograde transport by facilitating the association of NTRK2/TRKB with KLC1. May be involved in targeting uroplakins to urothelial apical membranes. In Bos taurus (Bovine), this protein is Ras-related protein Rab-27B (RAB27B).